The chain runs to 356 residues: Photosystem II protein D1 4 (356 aa).

The next 3 helical transmembrane spans lie at 32–49 (YIGW…AATT), 121–136 (HFLI…FWEL), and 145–159 (WIAV…AATS). His121 is a chlorophyll a binding site. [CaMn4O5] cluster is bound by residues Asp173 and Asp192. The helical transmembrane segment at 200-221 (FHMLGVAGVFGGALLSSLHGSL) threads the bilayer. His201 is a binding site for chlorophyll a. Position 218 (His218) interacts with a quinone. Positions 218 and 276 each coordinate Fe cation. A helical membrane pass occupies residues 278–292 (LLAALPTIGIWFAAM). His336 is a [CaMn4O5] cluster binding site.

Belongs to the reaction center PufL/M/PsbA/D family. As to quaternary structure, PSII is composed of 1 copy each of membrane proteins PsbA, PsbB, PsbC, PsbD, PsbE, PsbF, PsbH, PsbI, PsbJ, PsbK, PsbL, PsbM, PsbT, PsbX, PsbY, PsbZ, Psb30/Ycf12, peripheral proteins PsbO, CyanoQ (PsbQ), PsbU, PsbV and a large number of cofactors. It forms dimeric complexes. The cofactor is The D1/D2 heterodimer binds P680, chlorophylls that are the primary electron donor of PSII, and subsequent electron acceptors. It shares a non-heme iron and each subunit binds pheophytin, quinone, additional chlorophylls, carotenoids and lipids. D1 provides most of the ligands for the Mn4-Ca-O5 cluster of the oxygen-evolving complex (OEC). There is also a Cl(-1) ion associated with D1 and D2, which is required for oxygen evolution. The PSII complex binds additional chlorophylls, carotenoids and specific lipids.. Tyr-164 forms a radical intermediate that is referred to as redox-active TyrZ, YZ or Y-Z.

It localises to the cellular thylakoid membrane. It catalyses the reaction 2 a plastoquinone + 4 hnu + 2 H2O = 2 a plastoquinol + O2. In terms of biological role, photosystem II (PSII) is a light-driven water:plastoquinone oxidoreductase that uses light energy to abstract electrons from H(2)O, generating O(2) and a proton gradient subsequently used for ATP formation. It consists of a core antenna complex that captures photons, and an electron transfer chain that converts photonic excitation into a charge separation. The D1/D2 (PsbA/PsbD) reaction center heterodimer binds P680, the primary electron donor of PSII as well as several subsequent electron acceptors. This Trichormus variabilis (strain ATCC 29413 / PCC 7937) (Anabaena variabilis) protein is Photosystem II protein D1 4.